A 748-amino-acid chain; its full sequence is 5-methyltetrahydropteroyltriglutamate--homocysteine methyltransferase (748 aa).

Lysine 111 contributes to the 5-methyltetrahydropteroyltri-L-glutamate binding site. Residues 428 to 430 and glutamate 478 each bind L-homocysteine; that span reads IGS. L-methionine-binding positions include 428–430 and glutamate 478; that span reads IGS. 5-methyltetrahydropteroyltri-L-glutamate contacts are provided by residues 509-510 and tryptophan 555; that span reads RC. Aspartate 593 contacts L-homocysteine. Aspartate 593 serves as a coordination point for L-methionine. Glutamate 599 lines the 5-methyltetrahydropteroyltri-L-glutamate pocket. 3 residues coordinate Zn(2+): histidine 635, cysteine 637, and glutamate 659. Histidine 687 serves as the catalytic Proton donor. Cysteine 719 is a Zn(2+) binding site.

It belongs to the vitamin-B12 independent methionine synthase family. The cofactor is Zn(2+).

The catalysed reaction is 5-methyltetrahydropteroyltri-L-glutamate + L-homocysteine = tetrahydropteroyltri-L-glutamate + L-methionine. Its pathway is amino-acid biosynthesis; L-methionine biosynthesis via de novo pathway; L-methionine from L-homocysteine (MetE route): step 1/1. Functionally, catalyzes the transfer of a methyl group from 5-methyltetrahydrofolate to homocysteine resulting in methionine formation. This chain is 5-methyltetrahydropteroyltriglutamate--homocysteine methyltransferase, found in Herpetosiphon aurantiacus (strain ATCC 23779 / DSM 785 / 114-95).